The chain runs to 303 residues: MAGMSLQHPWAFAFGLLGNIISFMTYLAPLPTFYRIYKSKSTQGFQSVPYVVALFSAMLWIYYALLKSDECLLITINSAGCVIETIYIAVYLVYAPKKAKMFTAKLLLLVNVGVFGLILLLTLLLSAGDRRIVVLGWVCVGFSVSVFVAPLSIIRLVVRTKSVEFMPFSLSFSLTISAVVWFLYGLLIKDKYVALPNVLGFSFGVIQMGLYAMYRNSTPKAVLTKEVEAATATGDDDHSAAGVKEHVVNIAKLSAAVDVVKTREVHPVDVESPPAEAPPQEDDKAAAATAAAVAGAGEKKVAA.

Residues 1–9 lie on the Extracellular side of the membrane; it reads MAGMSLQHP. A helical transmembrane segment spans residues 10-30; sequence WAFAFGLLGNIISFMTYLAPL. Positions 13 to 98 constitute a MtN3/slv 1 domain; the sequence is AFGLLGNIIS…AVYLVYAPKK (86 aa). Topologically, residues 31–44 are cytoplasmic; that stretch reads PTFYRIYKSKSTQG. A helical transmembrane segment spans residues 45–65; sequence FQSVPYVVALFSAMLWIYYAL. Over 66-72 the chain is Extracellular; the sequence is LKSDECL. Residues 73–93 traverse the membrane as a helical segment; sequence LITINSAGCVIETIYIAVYLV. Topologically, residues 94–105 are cytoplasmic; it reads YAPKKAKMFTAK. A helical transmembrane segment spans residues 106-126; the sequence is LLLLVNVGVFGLILLLTLLLS. The Extracellular segment spans residues 127–133; sequence AGDRRIV. A helical transmembrane segment spans residues 134–154; sequence VLGWVCVGFSVSVFVAPLSII. Residues 134–217 form the MtN3/slv 2 domain; the sequence is VLGWVCVGFS…MGLYAMYRNS (84 aa). At 155–167 the chain is on the cytoplasmic side; that stretch reads RLVVRTKSVEFMP. Residues 168 to 188 traverse the membrane as a helical segment; it reads FSLSFSLTISAVVWFLYGLLI. Residues 189-192 are Extracellular-facing; that stretch reads KDKY. The helical transmembrane segment at 193 to 213 threads the bilayer; that stretch reads VALPNVLGFSFGVIQMGLYAM. Over 214–303 the chain is Cytoplasmic; that stretch reads YRNSTPKAVL…AGAGEKKVAA (90 aa). The interval 266 to 290 is disordered; it reads HPVDVESPPAEAPPQEDDKAAAATA.

This sequence belongs to the SWEET sugar transporter family. Forms homooligomers and/or heterooligomers.

It localises to the cell membrane. In terms of biological role, mediates both low-affinity uptake and efflux of sugar across the plasma membrane. This is Bidirectional sugar transporter SWEET14 (SWEET14) from Oryza sativa subsp. indica (Rice).